Here is a 368-residue protein sequence, read N- to C-terminus: Chaperone protein DnaJ (368 aa).

The 66-residue stretch at 5-70 (DYYEVLGVSK…EKRSMYDRMG (66 aa)) folds into the J domain. The CR-type zinc finger occupies 132-210 (GVKKTITFTA…CHGSGVADRQ (79 aa)). Residues Cys-145, Cys-148, Cys-162, Cys-165, Cys-184, Cys-187, Cys-198, and Cys-201 each contribute to the Zn(2+) site. CXXCXGXG motif repeat units follow at residues 145 to 152 (CEVCDGKG), 162 to 169 (CRTCHGTG), 184 to 191 (CGTCRGQG), and 198 to 205 (CQSCHGSG). The segment at 349-368 (DGDEHSSSPKKKSFFDRLFD) is disordered. Residues 350-368 (GDEHSSSPKKKSFFDRLFD) are compositionally biased toward basic and acidic residues.

This sequence belongs to the DnaJ family. Homodimer. The cofactor is Zn(2+).

Its subcellular location is the cytoplasm. Participates actively in the response to hyperosmotic and heat shock by preventing the aggregation of stress-denatured proteins and by disaggregating proteins, also in an autonomous, DnaK-independent fashion. Unfolded proteins bind initially to DnaJ; upon interaction with the DnaJ-bound protein, DnaK hydrolyzes its bound ATP, resulting in the formation of a stable complex. GrpE releases ADP from DnaK; ATP binding to DnaK triggers the release of the substrate protein, thus completing the reaction cycle. Several rounds of ATP-dependent interactions between DnaJ, DnaK and GrpE are required for fully efficient folding. Also involved, together with DnaK and GrpE, in the DNA replication of plasmids through activation of initiation proteins. This Acinetobacter baylyi (strain ATCC 33305 / BD413 / ADP1) protein is Chaperone protein DnaJ.